Reading from the N-terminus, the 289-residue chain is 3-methyl-2-oxobutanoate hydroxymethyltransferase (289 aa).

The span at 1–15 (MSTTFKLDTSTSRAN) shows a compositional bias: polar residues. Positions 1–21 (MSTTFKLDTSTSRANPTPAPM) are disordered. 2 residues coordinate Mg(2+): Asp-67 and Asp-106. 3-methyl-2-oxobutanoate is bound by residues 67-68 (DS), Asp-106, and Lys-136. Glu-138 is a binding site for Mg(2+). Glu-205 functions as the Proton acceptor in the catalytic mechanism.

This sequence belongs to the PanB family. As to quaternary structure, homodecamer; pentamer of dimers. Mg(2+) is required as a cofactor.

The protein localises to the cytoplasm. It carries out the reaction 3-methyl-2-oxobutanoate + (6R)-5,10-methylene-5,6,7,8-tetrahydrofolate + H2O = 2-dehydropantoate + (6S)-5,6,7,8-tetrahydrofolate. The protein operates within cofactor biosynthesis; (R)-pantothenate biosynthesis; (R)-pantoate from 3-methyl-2-oxobutanoate: step 1/2. Its function is as follows. Catalyzes the reversible reaction in which hydroxymethyl group from 5,10-methylenetetrahydrofolate is transferred onto alpha-ketoisovalerate to form ketopantoate. The polypeptide is 3-methyl-2-oxobutanoate hydroxymethyltransferase (Erythrobacter litoralis (strain HTCC2594)).